A 395-amino-acid polypeptide reads, in one-letter code: MAVQKEATLVRQIIRAAGGHAADVRELVAEHGPEAVTAVLVDEIVSRAPHPVNDVPVLVELAVRSGDALVPRRLAVAQGAPVRRAAPDDDGFVAMRVEYELDELVRELFGPCRERAAGTRGTTLFPYATSGTGHIDTYFLAAQQATATVLAGCTSAKPDLNELTSRYLTPKWGSLHWFTPHYDRHFREYRNEEVRVLEIGIGGYQHPEWGGGSLRMWKHFFHRGLIYGLDIEDKSHAEEQRITTVVGDQNDPGCLTELAARYGPFDIVIDDGSHINEHVRTSFHALFPHVRPGGLYVIEDLWTAYWPGFGGDSDPGKSDLTSLGLVKSLVDSLQHQELPEDSGRSPGYADRHVVGLHVYHNLAFIEKGVNSEGGIPGWIPRDFDALVAASSGGAA.

It catalyses the reaction demethylmacrocin + S-adenosyl-L-methionine = macrocin + S-adenosyl-L-homocysteine + H(+). Its pathway is antibiotic biosynthesis; tylosin biosynthesis. O-methyltransferase that catalyzes the conversion of demethylmacrocin to macrocin, the penultimate step of tylosin antibiotic biosynthesis. Also able to mediate the conversion of demethyllactenocin to lactenocin. This chain is Demethylmacrocin O-methyltransferase (tylE), found in Streptomyces fradiae (Streptomyces roseoflavus).